We begin with the raw amino-acid sequence, 1097 residues long: Leukemia inhibitory factor receptor (1097 aa).

The first 44 residues, M1 to S44, serve as a signal peptide directing secretion. At E45–S833 the chain is on the extracellular side. The region spanning K46 to N131 is the Fibronectin type-III 1 domain. 2 disulfides stabilise this stretch: C55/C65 and C82/C90. N85, N131, N143, N191, N243, and N303 each carry an N-linked (GlcNAc...) asparagine glycan. A disulfide bond links C213 and C270. Fibronectin type-III domains are found at residues P332–R434, I435–I534, G538–D629, P627–I719, and P724–S833. C341 and C351 form a disulfide bridge. 8 N-linked (GlcNAc...) asparagine glycosylation sites follow: N366, N390, N407, N426, N445, N471, N481, and N489. Residues C466 and C511 are joined by a disulfide bond. Positions W519–S523 match the WSXWS motif motif. N572, N652, N663, N680, N729, and N787 each carry an N-linked (GlcNAc...) asparagine glycan. Residues V834–T854 form a helical membrane-spanning segment. Topologically, residues S855 to D1097 are cytoplasmic. Residues F869–E877 carry the Box 1 motif motif. S927 is modified (phosphoserine). 2 disordered regions span residues Q982–M1005 and L1022–D1097. Composition is skewed to polar residues over residues A1032–Q1067 and S1086–D1097. S1044 bears the Phosphoserine mark.

This sequence belongs to the type I cytokine receptor family. Type 2 subfamily. As to quaternary structure, heterodimer composed of LIFR and IL6ST. The heterodimer formed by LIFR and IL6ST interacts with the complex formed by CNTF and CNTFR.

Its subcellular location is the cell membrane. Signal-transducing molecule. May have a common pathway with IL6ST. The soluble form inhibits the biological activity of LIF by blocking its binding to receptors on target cells. In Canis lupus familiaris (Dog), this protein is Leukemia inhibitory factor receptor (LIFR).